The sequence spans 196 residues: MKIGVLGLQGAVREHVRAIEACGAEAVIVKKSEQLEGLDGLVLPGGESTTXRRLIDRYGLXEPLKQFAAAGKPXFGTCAGLILLAKRIVGYDEPHLGLXDITVERNSFGRQRESFEAELSIKGVGDGFVGVFIRAPHIVEAGDGVDVLATYNDRIVAARQGQFLGCSFHPELTDDHRLXQYFLNXVKEAKXASSLK.

L-glutamine is bound at residue 46 to 48; the sequence is GES. Cys78 (nucleophile) is an active-site residue. Residues Arg105 and 133–134 contribute to the L-glutamine site; that span reads IR. Active-site charge relay system residues include His169 and Glu171.

Belongs to the glutaminase PdxT/SNO family. In the presence of PdxS, forms a dodecamer of heterodimers. Only shows activity in the heterodimer.

The enzyme catalyses aldehydo-D-ribose 5-phosphate + D-glyceraldehyde 3-phosphate + L-glutamine = pyridoxal 5'-phosphate + L-glutamate + phosphate + 3 H2O + H(+). It catalyses the reaction L-glutamine + H2O = L-glutamate + NH4(+). Its pathway is cofactor biosynthesis; pyridoxal 5'-phosphate biosynthesis. Catalyzes the hydrolysis of glutamine to glutamate and ammonia as part of the biosynthesis of pyridoxal 5'-phosphate. The resulting ammonia molecule is channeled to the active site of PdxS. The chain is Pyridoxal 5'-phosphate synthase subunit PdxT from Geobacillus stearothermophilus (Bacillus stearothermophilus).